The primary structure comprises 443 residues: Ribosomal protein uS12 methylthiotransferase RimO (443 aa).

The MTTase N-terminal domain maps to 5 to 116 (PSVAVAHLGC…IVDVIQRAEA (112 aa)). Cys14, Cys50, Cys79, Cys154, Cys158, and Cys161 together coordinate [4Fe-4S] cluster. The Radical SAM core domain occupies 140–370 (TTTEGTAYVR…ALQQPISWQQ (231 aa)). In terms of domain architecture, TRAM spans 372–442 (QQEVGKTVQV…AYDLQGQLVS (71 aa)).

The protein belongs to the methylthiotransferase family. RimO subfamily. [4Fe-4S] cluster serves as cofactor.

It localises to the cytoplasm. It catalyses the reaction L-aspartate(89)-[ribosomal protein uS12]-hydrogen + (sulfur carrier)-SH + AH2 + 2 S-adenosyl-L-methionine = 3-methylsulfanyl-L-aspartate(89)-[ribosomal protein uS12]-hydrogen + (sulfur carrier)-H + 5'-deoxyadenosine + L-methionine + A + S-adenosyl-L-homocysteine + 2 H(+). Catalyzes the methylthiolation of an aspartic acid residue of ribosomal protein uS12. The sequence is that of Ribosomal protein uS12 methylthiotransferase RimO from Acaryochloris marina (strain MBIC 11017).